Consider the following 200-residue polypeptide: dITP/XTP pyrophosphatase (200 aa).

8–13 (TGNQGK) provides a ligand contact to substrate. The Proton acceptor role is filled by Asp-69. Position 69 (Asp-69) interacts with Mg(2+). Substrate contacts are provided by residues Ser-70, 154–157 (FGYD), Lys-177, and 182–183 (HR).

This sequence belongs to the HAM1 NTPase family. In terms of assembly, homodimer. Mg(2+) serves as cofactor.

The enzyme catalyses XTP + H2O = XMP + diphosphate + H(+). It catalyses the reaction dITP + H2O = dIMP + diphosphate + H(+). The catalysed reaction is ITP + H2O = IMP + diphosphate + H(+). Its function is as follows. Pyrophosphatase that catalyzes the hydrolysis of nucleoside triphosphates to their monophosphate derivatives, with a high preference for the non-canonical purine nucleotides XTP (xanthosine triphosphate), dITP (deoxyinosine triphosphate) and ITP. Seems to function as a house-cleaning enzyme that removes non-canonical purine nucleotides from the nucleotide pool, thus preventing their incorporation into DNA/RNA and avoiding chromosomal lesions. The chain is dITP/XTP pyrophosphatase from Vibrio vulnificus (strain CMCP6).